Here is a 301-residue protein sequence, read N- to C-terminus: ATP synthase gamma chain (301 aa).

Belongs to the ATPase gamma chain family. As to quaternary structure, F-type ATPases have 2 components, CF(1) - the catalytic core - and CF(0) - the membrane proton channel. CF(1) has five subunits: alpha(3), beta(3), gamma(1), delta(1), epsilon(1). CF(0) has three main subunits: a, b and c.

The protein resides in the cell inner membrane. In terms of biological role, produces ATP from ADP in the presence of a proton gradient across the membrane. The gamma chain is believed to be important in regulating ATPase activity and the flow of protons through the CF(0) complex. The chain is ATP synthase gamma chain from Bordetella pertussis (strain Tohama I / ATCC BAA-589 / NCTC 13251).